Consider the following 315-residue polypeptide: Ankyrin repeat domain-containing protein EMB506, chloroplastic (315 aa).

A chloroplast-targeting transit peptide spans 1–39 (MVSSVLSIPPQTCLLPRLPISDSVNCKSKIVYCLSTSVR). The segment covering 44-65 (KRQSTARTRSFTETNRRTPSVQ) has biased composition (polar residues). The segment at 44–106 (KRQSTARTRS…DNESDWEDDS (63 aa)) is disordered. Residues 72–104 (EDPDDGSDSENEYEGEEEDGIGNDLDNESDWED) show a composition bias toward acidic residues. ANK repeat units follow at residues 151-180 (KSWKPLQTLALSMQIQLMDNLIENGLDIDD), 184-213 (DNQTALHKAIIGKKEAVISHLLRKGANPHL), 217-246 (DGAAPIHYAVQVGALQTVKLLFKYNVDVNV), 250-279 (EGWTPLHIAVQSRNRDITKILLTNGADKTR), and 283-307 (DGKLALDLALCFGRDFKSYDLVKLL).

As to quaternary structure, interacts with AKR. No homodimerization observed. Expressed in roots, inflorescence stems, flowers, siliques, dry seeds and mature cauline leaves.

It is found in the plastid. The protein resides in the chloroplast. Involved in the initial differentiation of the proplastid during the embryo development. Also required for correct cotyledon, true leaf and cauline leaf margin development. This is Ankyrin repeat domain-containing protein EMB506, chloroplastic (EMB506) from Arabidopsis thaliana (Mouse-ear cress).